We begin with the raw amino-acid sequence, 526 residues long: Glucose-6-phosphate 1-dehydrogenase (526 aa).

NADP(+) contacts are provided by residues 50–57 (GASGDLAK), Arg-84, and Lys-184. D-glucose 6-phosphate-binding positions include Lys-184, 214–218 (HYLGK), Glu-252, and Asp-271. His-276 serves as the catalytic Proton acceptor. Residue Arg-370 coordinates NADP(+). The D-glucose 6-phosphate site is built by Lys-373 and Arg-378. Lys-379, Arg-383, and Arg-406 together coordinate NADP(+). Residue Gln-408 participates in D-glucose 6-phosphate binding. Residues 414–416 (YFK), 434–436 (DLT), Arg-500, Tyr-516, and Trp-522 each bind NADP(+).

This sequence belongs to the glucose-6-phosphate dehydrogenase family.

It is found in the cytoplasm. The protein localises to the cytosol. It carries out the reaction D-glucose 6-phosphate + NADP(+) = 6-phospho-D-glucono-1,5-lactone + NADPH + H(+). The protein operates within carbohydrate degradation; pentose phosphate pathway; D-ribulose 5-phosphate from D-glucose 6-phosphate (oxidative stage): step 1/3. Its function is as follows. Cytosolic glucose-6-phosphate dehydrogenase that catalyzes the first and rate-limiting step of the oxidative branch within the pentose phosphate pathway/shunt, an alternative route to glycolysis for the dissimilation of carbohydrates and a major source of reducing power and metabolic intermediates for fatty acid and nucleic acid biosynthetic processes. In Ceratitis capitata (Mediterranean fruit fly), this protein is Glucose-6-phosphate 1-dehydrogenase (ZW).